The following is a 159-amino-acid chain: V-type proton ATPase 16 kDa proteolipid subunit c (159 aa).

Residues 1 to 12 (MSSEVSSDNPIY) are Lumenal-facing. A helical transmembrane segment spans residues 13 to 35 (GPFFGVMGAASAIIFSALGAAYG). Topologically, residues 36-57 (TAKSGTGIAAMSVMRPELIMKS) are cytoplasmic. Residues 58–78 (IIPVVMAGIIAIYGLVVAVLI) form a helical membrane-spanning segment. Residues 79-96 (AGALEEPSKYSLYRGFIH) are Lumenal-facing. A helical transmembrane segment spans residues 97–118 (LGAGLAVGFSGLAAGFAIGIVG). Residues 119–130 (DAGVRGTAQQPR) lie on the Cytoplasmic side of the membrane. The helical transmembrane segment at 131 to 156 (LFVGMILILIFAEVLGLYGLIVAIYL) threads the bilayer. Residues 157–159 (YTK) are Lumenal-facing.

It belongs to the V-ATPase proteolipid subunit family. In terms of assembly, V-ATPase is a heteromultimeric enzyme made up of two complexes: the ATP-hydrolytic V1 complex and the proton translocation V0 complex. The V1 complex consists of three catalytic AB heterodimers that form a heterohexamer, three peripheral stalks each consisting of EG heterodimers, one central rotor including subunits D and F, and the regulatory subunits C and H. The proton translocation complex V0 consists of the proton transport subunit a, a ring of proteolipid subunits c9c'', rotary subunit d, subunits e and f, and the accessory subunits VhaAC45 and ATP6AP2. In terms of tissue distribution, expressed in the larval middle mid-gut; predominantly in the copper cell region with lower levels of expression in the interstitial cells.

The protein localises to the membrane. Its function is as follows. Proton-conducting pore forming subunit of the V0 complex of vacuolar(H+)-ATPase (V-ATPase), a multisubunit enzyme composed of a peripheral complex (V1) that hydrolyzes ATP and a membrane integral complex (V0) that translocates protons. V-ATPase is responsible for acidifying and maintaining the pH of intracellular compartments and in some cell types, is targeted to the plasma membrane, where it is responsible for acidifying the extracellular environment. In enterocytes, acts as part of a pHCl-2 sensory pathway which mediates Tor-dependent larval growth and metabolism in response to zinc availability. Likely acts in maintaining enterocyte lysosomal acidification which consequently promotes Tor activation at the lysosome membrane. This chain is V-type proton ATPase 16 kDa proteolipid subunit c (Vha16-1), found in Drosophila melanogaster (Fruit fly).